An 804-amino-acid chain; its full sequence is Ribonucleoside-diphosphate reductase large subunit-like protein (804 aa).

It belongs to the ribonucleoside diphosphate reductase large chain family.

It localises to the virion. The protein localises to the host cytoplasm. In terms of biological role, does not possess a ribonucleotide reductase activity. Betaherpesviruses probably use another strategy to expand the dNTP pool in a quiescent host cell. This Homo sapiens (Human) protein is Ribonucleoside-diphosphate reductase large subunit-like protein.